A 583-amino-acid chain; its full sequence is Aspartate--tRNA ligase (583 aa).

Glutamate 173 contacts L-aspartate. The interval 197-200 (QLFK) is aspartate. Arginine 219 serves as a coordination point for L-aspartate. ATP is bound by residues 219-221 (RDE) and glutamine 228. Histidine 444 contributes to the L-aspartate binding site. Glutamate 478 serves as a coordination point for ATP. Arginine 485 contacts L-aspartate. 530-533 (GLDR) contributes to the ATP binding site.

This sequence belongs to the class-II aminoacyl-tRNA synthetase family. Type 1 subfamily. In terms of assembly, homodimer.

It is found in the cytoplasm. The catalysed reaction is tRNA(Asp) + L-aspartate + ATP = L-aspartyl-tRNA(Asp) + AMP + diphosphate. Functionally, catalyzes the attachment of L-aspartate to tRNA(Asp) in a two-step reaction: L-aspartate is first activated by ATP to form Asp-AMP and then transferred to the acceptor end of tRNA(Asp). This is Aspartate--tRNA ligase from Azobacteroides pseudotrichonymphae genomovar. CFP2.